Consider the following 123-residue polypeptide: Large ribosomal subunit protein bL12 (123 aa).

Belongs to the bacterial ribosomal protein bL12 family. As to quaternary structure, homodimer. Part of the ribosomal stalk of the 50S ribosomal subunit. Forms a multimeric L10(L12)X complex, where L10 forms an elongated spine to which 2 to 4 L12 dimers bind in a sequential fashion. Binds GTP-bound translation factors.

In terms of biological role, forms part of the ribosomal stalk which helps the ribosome interact with GTP-bound translation factors. Is thus essential for accurate translation. The sequence is that of Large ribosomal subunit protein bL12 from Borrelia duttonii (strain Ly).